Reading from the N-terminus, the 229-residue chain is Matrix protein (229 aa).

Residues 1–10 (MSSLKKILGL) are compositionally biased toward low complexity. Residues 1–23 (MSSLKKILGLKGKGKKSKKLGIA) are disordered. Residues 2–4 (SSL) carry the dynamin binding motif. The short motif at 24-27 (PPPY) is the PPXY motif element. Positions 37-40 (PSAP) match the PTAP/PSAP motif motif.

It belongs to the vesiculoviruses matrix protein family. In terms of assembly, homomultimer. Interacts with viral nucleocapsid; this interaction contributes to the virion assembly. Interacts with the viral envelope glycoprotein; this interaction contributes to the virion assembly. Interacts with host RAE1-NUP98 complex. Interacts with host NEDD4 and TSG101. Interacts with host dynamin. Interacts with host NDUFAF4; the interaction inhibits viral propagation and is independent of interferon activation. Interacts with host GTF2H5; the interaction may inhibit host transcription. Post-translationally, phosphorylated by host.

It is found in the virion. Its subcellular location is the host endomembrane system. The protein resides in the host nucleus membrane. The protein localises to the host nucleus. It localises to the host cytoplasm. In terms of biological role, forms a double layer around the helical nucleocapsid, the inner matrix layer binding to the N helix and the outer matrix layer binding to the envelope glycoprotein. Plays a major role in assembly and budding of virion, by recruiting cellular partners of the ESCRT complexes that play a key role in releasing the budding particle from the host membrane. Condensates the ribonucleocapsid core during virus assembly. Inhibits the host mRNA nuclear export thereby inducing the shut off of cellular transcription and preventing the interferon signaling and the establishment of antiviral state in infected cells. This shutoff presumably inhibits interferon signaling and thus establishment of antiviral state in virus infected cells. Induces cell-rounding, cytoskeleton disorganization and apoptosis in infected cell. Inhibits host transcription, possibly through interaction with host DNA repair factor IIH/TFIIH GTF2H5 subunit. The sequence is that of Matrix protein (M) from Aedes (Bovine).